The sequence spans 1111 residues: Myosin IB heavy chain (1111 aa).

Residues 9–691 (QGTDDLVMLP…TVFLLEEALD (683 aa)) enclose the Myosin motor domain. Residue 102–109 (GESGAGKT) participates in ATP binding. Ser-332 is modified (phosphoserine). Positions 547–627 (GSLQKKRPTT…GFAYRNTFDK (81 aa)) are actin-binding. A TH1 domain is found at 729-913 (KERQRNSIDR…KGLIGTIASG (185 aa)). The segment at 910 to 1058 (IASGLPSSTD…PAPQPSRPTA (149 aa)) is disordered. A compositionally biased stretch (polar residues) spans 914–928 (LPSSTDSTPKNYNPN). Composition is skewed to low complexity over residues 929–944 (SMSQ…QSAG), 952–967 (GAGQ…QQRP), and 991–1012 (PMGA…LPQP). Gly residues predominate over residues 1017–1040 (GAPGGRGAPMGRGAPGGGPAGAGG). The region spanning 1053–1111 (PSRPTAKALYDYDASSTDELSFKEGDIIFIVQKDNGGWTQGELKSGQKGWAPTNYLQYN) is the SH3 domain.

It belongs to the TRAFAC class myosin-kinesin ATPase superfamily. Myosin family. Myosin I heavy chain is single-headed. Dimer of a heavy and a light chain. Inability to self-assemble into filaments.

The protein localises to the cell projection. It localises to the pseudopodium. Its subcellular location is the cytoplasm. It is found in the cell cortex. Myosin is a protein that binds to actin and has ATPase activity that is activated by actin. Myosin IB may have a role in chemotaxis and aggregation; it could serve to stabilize and even retract cortical structures, such as pseudopods and lamellopods. Involved in the whole cell motility of aggregation-stages cells. Overexpression results in significant decrease in the rate of cellular translocation and fluid-phase pinocytosis and abnormalities in the normal rearrangement of the actin cytoskeleton. The chain is Myosin IB heavy chain (myoB) from Dictyostelium discoideum (Social amoeba).